Here is a 192-residue protein sequence, read N- to C-terminus: Ion-translocating oxidoreductase complex subunit B (192 aa).

The interval 1–26 (MNAIWIAVAAVSLLALAFGAILGYAS) is hydrophobic. Positions 32–91 (EDDPVVEKIDEILPQSQCGQCGYPGCRPYAEAISCNGEKINRCAPGGEAVMLKIAELLNV) constitute a 4Fe-4S domain. [4Fe-4S] cluster is bound by residues C49, C52, C57, C74, C117, C120, C123, C127, C147, C150, C153, and C157. 4Fe-4S ferredoxin-type domains follow at residues 108–137 (MVAV…GATR) and 138–167 (AMHT…LQPV).

The protein belongs to the 4Fe4S bacterial-type ferredoxin family. RnfB subfamily. The complex is composed of six subunits: RsxA, RsxB, RsxC, RsxD, RsxE and RsxG. Requires [4Fe-4S] cluster as cofactor.

The protein localises to the cell inner membrane. Part of a membrane-bound complex that couples electron transfer with translocation of ions across the membrane. Required to maintain the reduced state of SoxR. The chain is Ion-translocating oxidoreductase complex subunit B from Escherichia coli O81 (strain ED1a).